A 336-amino-acid polypeptide reads, in one-letter code: F-box protein At5g50450 (336 aa).

The region spanning 19-70 is the F-box domain; it reads NNHFEDLHDDLIISILRKLATSASSPSDFLTVLSTCKRLNRLGLHPLVLSKA. Zn(2+)-binding residues include H263, C266, C279, C282, C288, C292, H301, and C305. An MYND-type; atypical zinc finger spans residues 263–305; that stretch reads HGGCGRPETRAHEFRRCSVCGKVNYCSRGCQALDWRAKHKVEC.

This Arabidopsis thaliana (Mouse-ear cress) protein is F-box protein At5g50450.